Reading from the N-terminus, the 735-residue chain is Protein RETICULATA-RELATED 5, chloroplastic (735 aa).

A chloroplast-targeting transit peptide spans 1–75 (MKPTTNGGLL…TRRAILVAPP (75 aa)). The next 2 membrane-spanning stretches (helical) occupy residues 519–539 (ASVV…FISY) and 582–602 (VIIG…AAVG). A compositionally biased stretch (polar residues) spans 714–726 (ASQSTVEYSTTEE). Residues 714 to 735 (ASQSTVEYSTTEEASMDDLKNQ) are disordered.

Belongs to the RETICULATA family.

It is found in the plastid. The protein resides in the chloroplast membrane. Functionally, may play a role in leaf development. This chain is Protein RETICULATA-RELATED 5, chloroplastic, found in Arabidopsis thaliana (Mouse-ear cress).